The sequence spans 399 residues: Adenylate cyclase (399 aa).

Positions 1–10 (MTVGDTTSGS) are enriched in polar residues. The tract at residues 1 to 35 (MTVGDTTSGSGEEPAADSSVHATPHHEVDHTVEPT) is disordered. The segment covering 24 to 33 (PHHEVDHTVE) has biased composition (basic and acidic residues). A Guanylate cyclase domain is found at 198–307 (RVRFADLVGF…TTVNLASRLT (110 aa)). 2 residues coordinate Mg(2+): Asp-203 and Asp-247.

Belongs to the adenylyl cyclase class-3 family. Mg(2+) serves as cofactor.

It catalyses the reaction ATP = 3',5'-cyclic AMP + diphosphate. This is Adenylate cyclase (cya) from Streptomyces griseus.